Here is a 98-residue protein sequence, read N- to C-terminus: MPFIYINVLLAYFMSLLGLLIYRSHLMSSLLCLEGMMLSLFIMATLMTLNMHLTLMYMMPIVLLVFAACEAAVGLALLVLISNLYGLDYVQNLNLLQC.

3 helical membrane-spanning segments follow: residues 1-21 (MPFI…GLLI), 29-49 (SLLC…LMTL), and 61-81 (IVLL…LVLI).

It belongs to the complex I subunit 4L family. As to quaternary structure, core subunit of respiratory chain NADH dehydrogenase (Complex I) which is composed of 45 different subunits.

It localises to the mitochondrion inner membrane. It carries out the reaction a ubiquinone + NADH + 5 H(+)(in) = a ubiquinol + NAD(+) + 4 H(+)(out). In terms of biological role, core subunit of the mitochondrial membrane respiratory chain NADH dehydrogenase (Complex I) which catalyzes electron transfer from NADH through the respiratory chain, using ubiquinone as an electron acceptor. Part of the enzyme membrane arm which is embedded in the lipid bilayer and involved in proton translocation. This chain is NADH-ubiquinone oxidoreductase chain 4L (MT-ND4L), found in Aotus trivirgatus (Three-striped night monkey).